A 412-amino-acid chain; its full sequence is Gamma-glutamyl phosphate reductase (412 aa).

This sequence belongs to the gamma-glutamyl phosphate reductase family.

The protein resides in the cytoplasm. The catalysed reaction is L-glutamate 5-semialdehyde + phosphate + NADP(+) = L-glutamyl 5-phosphate + NADPH + H(+). It participates in amino-acid biosynthesis; L-proline biosynthesis; L-glutamate 5-semialdehyde from L-glutamate: step 2/2. In terms of biological role, catalyzes the NADPH-dependent reduction of L-glutamate 5-phosphate into L-glutamate 5-semialdehyde and phosphate. The product spontaneously undergoes cyclization to form 1-pyrroline-5-carboxylate. This Bartonella quintana (strain Toulouse) (Rochalimaea quintana) protein is Gamma-glutamyl phosphate reductase.